The chain runs to 213 residues: MARKTAAEAEETRQRIIDAALEVFVAQGVSDATLDQIARKAGVTRGAVYWHFNGKLEVLQAVLASRQHPLELDFTPDLGIERSWEAVVVAMLDAVHSPQSKQFSEILIYQGLDESGLIHNRMVQASDRFLQYIHQVLRHAVTQGELPINLDLQTSIGVFKGLITGLLYEGLRSKDQQAQIIKVALGSFWALLREPPRFLLCEEAQIKQVKSFE.

Positions E10–L70 constitute an HTH tetR-type domain. A DNA-binding region (H-T-H motif) is located at residues T33–F52.

In conjunction with SrpS represses the srpABC operon. The protein is HTH-type transcriptional regulator SrpR (srpR) of Pseudomonas putida (Arthrobacter siderocapsulatus).